The following is a 331-amino-acid chain: Lipoyl synthase (331 aa).

Positions 60, 65, 71, 86, 90, 93, and 301 each coordinate [4Fe-4S] cluster. The Radical SAM core domain occupies 72 to 290 (WSRGTATFML…REEGMQLGFL (219 aa)).

It belongs to the radical SAM superfamily. Lipoyl synthase family. The cofactor is [4Fe-4S] cluster.

It is found in the cytoplasm. The enzyme catalyses [[Fe-S] cluster scaffold protein carrying a second [4Fe-4S](2+) cluster] + N(6)-octanoyl-L-lysyl-[protein] + 2 oxidized [2Fe-2S]-[ferredoxin] + 2 S-adenosyl-L-methionine + 4 H(+) = [[Fe-S] cluster scaffold protein] + N(6)-[(R)-dihydrolipoyl]-L-lysyl-[protein] + 4 Fe(3+) + 2 hydrogen sulfide + 2 5'-deoxyadenosine + 2 L-methionine + 2 reduced [2Fe-2S]-[ferredoxin]. Its pathway is protein modification; protein lipoylation via endogenous pathway; protein N(6)-(lipoyl)lysine from octanoyl-[acyl-carrier-protein]: step 2/2. Functionally, catalyzes the radical-mediated insertion of two sulfur atoms into the C-6 and C-8 positions of the octanoyl moiety bound to the lipoyl domains of lipoate-dependent enzymes, thereby converting the octanoylated domains into lipoylated derivatives. This Deinococcus radiodurans (strain ATCC 13939 / DSM 20539 / JCM 16871 / CCUG 27074 / LMG 4051 / NBRC 15346 / NCIMB 9279 / VKM B-1422 / R1) protein is Lipoyl synthase.